Reading from the N-terminus, the 210-residue chain is Putative protein-lysine deacylase ABHD14B (210 aa).

At Ala2 the chain carries N-acetylalanine. Ser91 is subject to Phosphoserine. Catalysis depends on charge relay system residues Ser111, Asp162, and His188.

This sequence belongs to the AB hydrolase superfamily. ABHD14 family. May interact with TAF1.

It is found in the cytoplasm. The protein resides in the nucleus. It carries out the reaction L-lysyl-[protein] + acetyl-CoA = N(6)-acetyl-L-lysyl-[protein] + CoA + H(+). In terms of biological role, acts as an atypical protein-lysine deacetylase in vitro. Catalyzes the deacetylation of lysine residues using CoA as substrate, generating acetyl-CoA and the free amine of protein-lysine residues. Additional experiments are however required to confirm the protein-lysine deacetylase activity in vivo. Has hydrolase activity towards various surrogate p-nitrophenyl (pNp) substrates, such as pNp-butyrate, pNp-acetate and pNp-octanoate in vitro, with a strong preference for pNp-acetate. May activate transcription. In Pongo abelii (Sumatran orangutan), this protein is Putative protein-lysine deacylase ABHD14B.